The chain runs to 539 residues: GMP synthase [glutamine-hydrolyzing] (539 aa).

In terms of domain architecture, Glutamine amidotransferase type-1 spans 4–202 (KILILDFGSQ…VLGICRAKAD (199 aa)). The Nucleophile role is filled by cysteine 81. Catalysis depends on residues histidine 176 and glutamate 178. A GMPS ATP-PPase domain is found at 203–395 (WVMKDHIEEA…LGLPPEMVYR (193 aa)). 230–236 (SGGVDSS) is a binding site for ATP.

Homodimer.

It carries out the reaction XMP + L-glutamine + ATP + H2O = GMP + L-glutamate + AMP + diphosphate + 2 H(+). It functions in the pathway purine metabolism; GMP biosynthesis; GMP from XMP (L-Gln route): step 1/1. In terms of biological role, catalyzes the synthesis of GMP from XMP. The polypeptide is GMP synthase [glutamine-hydrolyzing] (Cupriavidus pinatubonensis (strain JMP 134 / LMG 1197) (Cupriavidus necator (strain JMP 134))).